Consider the following 179-residue polypeptide: MNQPNSLYLALLIEAKWQNPEDFHFSSDFAKHWLLEQGSLSRRLARHCQHLTVELMRNEKSGMGQLTRQETQGLSPEICLIREVVLSGDQTPWVLGRTLIPETTLADQPYDLATLGDIPLGLTVFSAEQVERDALQVAWIETPQGRLLARRSRLWMNHKPMLVAELFLPDAPIYSRESV.

Positions 82, 120, and 165 each coordinate substrate.

It belongs to the UbiC family.

The protein localises to the cytoplasm. The catalysed reaction is chorismate = 4-hydroxybenzoate + pyruvate. The protein operates within cofactor biosynthesis; ubiquinone biosynthesis. Functionally, removes the pyruvyl group from chorismate, with concomitant aromatization of the ring, to provide 4-hydroxybenzoate (4HB) for the ubiquinone pathway. This chain is Probable chorismate pyruvate-lyase, found in Vibrio vulnificus (strain CMCP6).